Consider the following 691-residue polypeptide: Lipase 2 (691 aa).

The signal sequence occupies residues 1-37 (MLRGQEERKYSIRKYSIGVVSVLAATMFVVTSHEAQA). The segment at 34 to 267 (EAQASEKIPT…KPTDKNTDNK (234 aa)) is disordered. Residues 38-296 (SEKIPTTNAA…ADAKKVRPLK (259 aa)) constitute a propeptide that is removed on maturation. Polar residues predominate over residues 41–72 (IPTTNAAAQKETLNQPGEQGNAITSHQMQSGK). Positions 73 to 82 (QLDDMHKENG) are enriched in basic and acidic residues. Polar residues-rich tracts occupy residues 94-115 (LQSS…NDNQ), 125-135 (SKQSHQNNATN), 142-172 (DQIQ…QPSI), and 186-196 (PTSTTPPSNDK). Composition is skewed to basic and acidic residues over residues 197–214 (TAPK…KHPN) and 258–267 (KPTDKNTDNK). Residue serine 413 is the Nucleophile of the active site. Glycine 580 serves as a coordination point for Ca(2+). The active-site Charge relay system is the aspartate 604. A Ca(2+)-binding site is contributed by aspartate 645. Histidine 646 acts as the Charge relay system in catalysis. Residues aspartate 648, aspartate 653, and aspartate 656 each coordinate Ca(2+).

It belongs to the AB hydrolase superfamily. Lipase family.

It localises to the secreted. It catalyses the reaction a triacylglycerol + H2O = a diacylglycerol + a fatty acid + H(+). The sequence is that of Lipase 2 (lip2) from Staphylococcus aureus (strain MRSA252).